A 282-amino-acid chain; its full sequence is Pseudokinase OPG198 (282 aa).

ATP-binding residues include Met-1 and Lys-30. In terms of domain architecture, Protein kinase spans 1 to 282 (MESFKYCFDN…DRLRRLFIQD (282 aa)).

Belongs to the protein kinase superfamily. Ser/Thr protein kinase family. Poxviruses subfamily. In terms of assembly, interacts with B1/VPK1. Interacts with host VRK1. Interacts with host VRK2.

It is found in the host nucleus. Its activity is regulated as follows. Both catalytically active kinases B1/VPK1 and host VRK2 repress B12 inhibitory activity in a B1/VPK1 deletion mutant strain. Functionally, pseudokinase that plays a role in viral DNA replication repression by activating the antiviral protein BANF1 and inhibiting the activity of host VRK1, a cellular modulator of BANF1. In Cynomys gunnisoni (Gunnison's prairie dog), this protein is Pseudokinase OPG198 (OPG198).